We begin with the raw amino-acid sequence, 588 residues long: Pleckstrin homology domain-containing family A member 4 (588 aa).

The PH domain occupies P54 to R153. Disordered stretches follow at residues E155–M349 and A495–L588. S164 is subject to Phosphoserine. Residues V183–E193 are compositionally biased toward basic and acidic residues. Positions T211–T222 are enriched in polar residues. Composition is skewed to low complexity over residues P246–A260 and Q321–T334. S562 bears the Phosphoserine mark.

The protein localises to the cytoplasm. Its subcellular location is the membrane. Functionally, binds specifically to phosphatidylinositol 3-phosphate (PtdIns3P), but not to other phosphoinositides. In Mus musculus (Mouse), this protein is Pleckstrin homology domain-containing family A member 4 (Plekha4).